Consider the following 500-residue polypeptide: Versicolorin B desaturase (500 aa).

The chain crosses the membrane as a helical span at residues 3-23 (FLSLPSLVIVIPVGYLLFHLG). N-linked (GlcNAc...) asparagine glycans are attached at residues Asn-243 and Asn-400. Cys-438 contacts heme.

This sequence belongs to the cytochrome P450 family. The cofactor is heme.

It localises to the membrane. It catalyses the reaction versicolorin B + NADPH + O2 + H(+) = versicolorin A + NADP(+) + 2 H2O. The protein operates within mycotoxin biosynthesis; aflatoxin biosynthesis. Versicolorin B desaturase; part of the gene cluster that mediates the biosynthesis of aflatoxins, a group of polyketide-derived furanocoumarins, and part of the most toxic and carcinogenic compounds among the known mycotoxins. The four major aflatoxins produced by A.parasiticus are aflatoxin B1 (AFB1), aflatoxin B2 (AFB2), aflatoxin G1 (AFG1) and aflatoxin G2 (AFG2). Within the aflatoxin pathway, the versicolorin B desaturase aflL catalyzes the conversion of versicolorin B (VERB) to versicolorin A (VERA). The biosynthesis of aflatoxins begins with the norsolorinic acid synthase aflC that combines a hexanoyl starter unit produced by the fatty acid synthase aflA/aflB and 7 malonyl-CoA extender units to synthesize the precursor NOR. The second step is the conversion of NOR to averantin and requires the norsolorinic acid ketoreductase aflD, which catalyzes the dehydration of norsolorinic acid to form (1'S)-averantin. The norsolorinic acid reductases aflE and aflF may also play a role in the conversion of NOR to AVN. The cytochrome P450 monooxygenase aflG then catalyzes the hydroxylation of AVN to 5'hydroxyaverantin (HAVN). The next step is performed by the 5'-hydroxyaverantin dehydrogenase aflH that transforms HAVN to 5'-oxoaverantin (OAVN) which is further converted to averufin (AVF) by aflK that plays a dual role in the pathway, as a 5'-oxoaverantin cyclase that mediates conversion of 5'-oxoaverantin, as well as a versicolorin B synthase in a later step in the pathway. The averufin oxidase aflI catalyzes the conversion of AVF to versiconal hemiacetal acetate (VHA). VHA is then the substrate for the versiconal hemiacetal acetate esterase aflJ to yield versiconal (VAL). Versicolorin B synthase aflK then converts VAL to versicolorin B (VERB) by closing the bisfuran ring of aflatoxin which is required for DNA-binding, thus giving to aflatoxin its activity as a mutagen. Then, the activity of the versicolorin B desaturase aflL leads to versicolorin A (VERA). A branch point starts from VERB since it can also be converted to dihydrodemethylsterigmatocystin (DMDHST), probably also by aflL, VERA being a precursor for aflatoxins B1 and G1, and DMDHST for aflatoxins B2 and G2. Next, the versicolorin reductase aflM and the cytochrome P450 monooxygenase aflN are involved in conversion of VERA to demethylsterigmatocystin (DMST). AflX and aflY seem also involved in this step, through probable aflX-mediated epoxide ring-opening step following versicolorin A oxidation and aflY-mediated Baeyer-Villiger oxidation required for the formation of the xanthone ring. The methyltransferase aflO then leads to the modification of DMST to sterigmatocystin (ST), and of DMDHST to dihydrosterigmatocystin (DHST). Both ST and DHST are then substrates of the O-methyltransferase aflP to yield O-methylsterigmatocystin (OMST) and dihydro-O-methylsterigmatocystin (DHOMST), respectively. Finally OMST is converted to aflatoxins B1 and G1, and DHOMST to aflatoxins B2 and G2, via the action of several enzymes including O-methylsterigmatocystin oxidoreductase aflQ, the cytochrome P450 monooxygenase aflU, but also the NADH-dependent flavin oxidoreductase nadA which is specifically required for the synthesis of AFG1. The sequence is that of Versicolorin B desaturase from Aspergillus parasiticus (strain ATCC 56775 / NRRL 5862 / SRRC 143 / SU-1).